A 536-amino-acid polypeptide reads, in one-letter code: Phosphoenolpyruvate carboxykinase (ATP) (536 aa).

Substrate-binding residues include Arg-61, Tyr-195, and Lys-201. Residues Lys-201, His-220, and 236–244 (GLSGTGKTT) contribute to the ATP site. Mn(2+) contacts are provided by Lys-201 and His-220. Residue Asp-257 coordinates Mn(2+). Residues Glu-285, Arg-322, and Thr-447 each coordinate ATP. A substrate-binding site is contributed by Arg-322.

The protein belongs to the phosphoenolpyruvate carboxykinase (ATP) family. Requires Mn(2+) as cofactor.

The protein resides in the cytoplasm. The enzyme catalyses oxaloacetate + ATP = phosphoenolpyruvate + ADP + CO2. Its pathway is carbohydrate biosynthesis; gluconeogenesis. Functionally, involved in the gluconeogenesis. Catalyzes the conversion of oxaloacetate (OAA) to phosphoenolpyruvate (PEP) through direct phosphoryl transfer between the nucleoside triphosphate and OAA. The chain is Phosphoenolpyruvate carboxykinase (ATP) from Rhizobium johnstonii (strain DSM 114642 / LMG 32736 / 3841) (Rhizobium leguminosarum bv. viciae).